Consider the following 469-residue polypeptide: Ectonucleoside triphosphate diphosphohydrolase 5 (469 aa).

The signal sequence occupies residues 1–24; that stretch reads MATPWGAVFFLLMIACAGSTVFYR. The active-site Proton acceptor is the E172. An N-linked (GlcNAc...) asparagine glycan is attached at N232. Intrachain disulfides connect C272–C303 and C363–C377.

This sequence belongs to the GDA1/CD39 NTPase family. Monomer; active form. Homodimer; disulfide-linked. Homodimers are enzymatically inactive. Requires Ca(2+) as cofactor. The cofactor is Mg(2+). N-glycosylated; high-mannose type. In terms of tissue distribution, expressed in fetal cells and most adult tissues.

The protein localises to the endoplasmic reticulum. Its subcellular location is the secreted. The enzyme catalyses a ribonucleoside 5'-diphosphate + H2O = a ribonucleoside 5'-phosphate + phosphate + H(+). It carries out the reaction GDP + H2O = GMP + phosphate + H(+). It catalyses the reaction UDP + H2O = UMP + phosphate + H(+). The catalysed reaction is IDP + H2O = IMP + phosphate + H(+). The enzyme catalyses CDP + H2O = CMP + phosphate + H(+). It carries out the reaction ADP + H2O = AMP + phosphate + H(+). It functions in the pathway protein modification; protein glycosylation. Functionally, hydrolyzes nucleoside diphosphates with a preference for GDP, IDP and UDP compared to ADP and CDP. In the lumen of the endoplasmic reticulum, hydrolyzes UDP that acts as an end-product feedback inhibitor of the UDP-Glc:glycoprotein glucosyltransferases. UMP can be transported back by an UDP-sugar antiporter to the cytosol where it is consumed to regenerate UDP-glucose. Therefore, it positively regulates protein reglucosylation by clearing UDP from the ER lumen and by promoting the regeneration of UDP-glucose. Protein reglucosylation is essential to proper glycoprotein folding and quality control in the ER. The polypeptide is Ectonucleoside triphosphate diphosphohydrolase 5 (ENTPD5) (Mesocricetus auratus (Golden hamster)).